The chain runs to 225 residues: Pyridoxine/pyridoxamine 5'-phosphate oxidase (225 aa).

Substrate contacts are provided by residues R9–Y12 and K78. FMN contacts are provided by residues R73 to K78, Y88 to T89, K95, and Q117. Substrate-binding residues include Y135, R139, and S143. Residues Q152 to S153 and W198 each bind FMN. R204–H206 is a substrate binding site. An FMN-binding site is contributed by R208.

The protein belongs to the pyridoxamine 5'-phosphate oxidase family. In terms of assembly, homodimer. The cofactor is FMN.

The catalysed reaction is pyridoxamine 5'-phosphate + O2 + H2O = pyridoxal 5'-phosphate + H2O2 + NH4(+). It carries out the reaction pyridoxine 5'-phosphate + O2 = pyridoxal 5'-phosphate + H2O2. The protein operates within cofactor metabolism; pyridoxal 5'-phosphate salvage; pyridoxal 5'-phosphate from pyridoxamine 5'-phosphate: step 1/1. It participates in cofactor metabolism; pyridoxal 5'-phosphate salvage; pyridoxal 5'-phosphate from pyridoxine 5'-phosphate: step 1/1. Its function is as follows. Catalyzes the oxidation of either pyridoxine 5'-phosphate (PNP) or pyridoxamine 5'-phosphate (PMP) into pyridoxal 5'-phosphate (PLP). The sequence is that of Pyridoxine/pyridoxamine 5'-phosphate oxidase from Nocardia farcinica (strain IFM 10152).